Here is a 343-residue protein sequence, read N- to C-terminus: 3-dehydroquinate synthase (343 aa).

Residues 86 to 90, 110 to 111, Lys123, and Lys132 contribute to the NAD(+) site; these read GALLD and TT. The Zn(2+) site is built by Glu165, His229, and His243.

Belongs to the sugar phosphate cyclases superfamily. Dehydroquinate synthase family. It depends on Co(2+) as a cofactor. Zn(2+) serves as cofactor. NAD(+) is required as a cofactor.

The protein localises to the cytoplasm. The catalysed reaction is 7-phospho-2-dehydro-3-deoxy-D-arabino-heptonate = 3-dehydroquinate + phosphate. It participates in metabolic intermediate biosynthesis; chorismate biosynthesis; chorismate from D-erythrose 4-phosphate and phosphoenolpyruvate: step 2/7. Its function is as follows. Catalyzes the conversion of 3-deoxy-D-arabino-heptulosonate 7-phosphate (DAHP) to dehydroquinate (DHQ). The chain is 3-dehydroquinate synthase from Pyrobaculum islandicum (strain DSM 4184 / JCM 9189 / GEO3).